Here is a 247-residue protein sequence, read N- to C-terminus: Protein GrpE (247 aa).

Disordered stretches follow at residues 1–68 (MKKN…KNDD) and 226–247 (PAEK…KNEN). 3 stretches are compositionally biased toward basic and acidic residues: residues 7–35 (KHAD…KDEQ), 43–54 (TSKENPQEDKAE), and 228–247 (EKQD…KNEN).

This sequence belongs to the GrpE family. In terms of assembly, homodimer.

The protein resides in the cytoplasm. Participates actively in the response to hyperosmotic and heat shock by preventing the aggregation of stress-denatured proteins, in association with DnaK and GrpE. It is the nucleotide exchange factor for DnaK and may function as a thermosensor. Unfolded proteins bind initially to DnaJ; upon interaction with the DnaJ-bound protein, DnaK hydrolyzes its bound ATP, resulting in the formation of a stable complex. GrpE releases ADP from DnaK; ATP binding to DnaK triggers the release of the substrate protein, thus completing the reaction cycle. Several rounds of ATP-dependent interactions between DnaJ, DnaK and GrpE are required for fully efficient folding. The protein is Protein GrpE of Treponema denticola (strain ATCC 35405 / DSM 14222 / CIP 103919 / JCM 8153 / KCTC 15104).